A 24-amino-acid polypeptide reads, in one-letter code: Retinol-binding protein 3 (24 aa).

The protein resides in the secreted. The protein localises to the extracellular space. It is found in the extracellular matrix. Its subcellular location is the interphotoreceptor matrix. In terms of biological role, IRBP shuttles 11-cis and all trans retinoids between the retinol isomerase in the pigment epithelium and the visual pigments in the photoreceptor cells of the retina. This chain is Retinol-binding protein 3 (RBP3), found in Ovis aries (Sheep).